The primary structure comprises 364 residues: Methylthioribose-1-phosphate isomerase (364 aa).

Residues 51–53 (RGA), Arg-88, and Gln-199 contribute to the substrate site. Asp-240 serves as the catalytic Proton donor. 250–251 (NK) contacts substrate.

It belongs to the eIF-2B alpha/beta/delta subunits family. MtnA subfamily.

The enzyme catalyses 5-(methylsulfanyl)-alpha-D-ribose 1-phosphate = 5-(methylsulfanyl)-D-ribulose 1-phosphate. The protein operates within amino-acid biosynthesis; L-methionine biosynthesis via salvage pathway; L-methionine from S-methyl-5-thio-alpha-D-ribose 1-phosphate: step 1/6. In terms of biological role, catalyzes the interconversion of methylthioribose-1-phosphate (MTR-1-P) into methylthioribulose-1-phosphate (MTRu-1-P). The chain is Methylthioribose-1-phosphate isomerase from Cereibacter sphaeroides (strain KD131 / KCTC 12085) (Rhodobacter sphaeroides).